The following is a 1363-amino-acid chain: Spike glycoprotein (1363 aa).

The signal sequence occupies residues 1–13 (MFLILLISLPMAL). Topologically, residues 14–1307 (AVIGDLKCTT…GTYEYYVKWP (1294 aa)) are extracellular. Positions 15 to 298 (VIGDLKCTTV…DFMSEIKCKT (284 aa)) constitute a BetaCoV S1-NTD domain. Disulfide bonds link C21–C165, C160–C193, C172–C252, C286–C296, and C331–C356. N59 and N133 each carry an N-linked (GlcNAc...) asparagine; by host glycan. N198 carries an N-linked (GlcNAc...) asparagine; by host glycan. The region spanning 329–617 (PDCNIEAWLN…DVNSGTTCST (289 aa)) is the BetaCoV S1-CTD domain. An N-linked (GlcNAc...) asparagine; by host glycan is attached at N359. Intrachain disulfides connect C374-C427 and C386-C615. N-linked (GlcNAc...) asparagine; by host glycans are attached at residues N437, N649, N676, N696, N714, N739, and N788. Fusion peptide regions lie at residues 914-935 (SAIE…VEAY) and 933-953 (EAYN…VQSY). An N-linked (GlcNAc...) asparagine; by host glycan is attached at N937. Residues C938 and C949 are joined by a disulfide bond. Residues 1014–1064 (QKLIANAFNNALDAIQEGFDATNSALVKIQAVVNANAEALNNLLQQLSNRF) form a heptad repeat 1 region. Residues 1043 to 1087 (QAVVNANAEALNNLLQQLSNRFGAISSSLQEILSRLDALEAQAQI) are a coiled coil. N-linked (GlcNAc...) asparagine; by host glycosylation is found at N1194, N1224, N1234, N1253, N1267, and N1288. Residues 1258–1296 (APDLSLDYINVTFLDLQDEMNRLQEAIKVLNQSYINLKD) form a heptad repeat 2 region. A coiled-coil region spans residues 1269-1297 (TFLDLQDEMNRLQEAIKVLNQSYINLKDI). The chain crosses the membrane as a helical span at residues 1308–1328 (WYVWLLIGLAGVAMLVLLFFI). At 1329–1363 (CCCTGCGTSCFKKCGGCCDDYTGHQELVIKTSHDD) the chain is on the cytoplasmic side. Residues 1359-1363 (TSHDD) carry the KxHxx motif.

The protein belongs to the betacoronaviruses spike protein family. In terms of assembly, homotrimer; each monomer consists of a S1 and a S2 subunit. The resulting peplomers protrude from the virus surface as spikes. Specific enzymatic cleavages in vivo yield mature proteins. The precursor is processed into S1 and S2 by host cell furin or another cellular protease to yield the mature S1 and S2 proteins. Additionally, a second cleavage leads to the release of a fusion peptide after viral attachment to host cell receptor. Post-translationally, the cytoplasmic Cys-rich domain is palmitoylated. Spike glycoprotein is digested within host endosomes.

The protein localises to the virion membrane. The protein resides in the host endoplasmic reticulum-Golgi intermediate compartment membrane. It is found in the host cell membrane. Attaches the virion to the cell membrane by interacting with host receptor, initiating the infection. Functionally, mediates fusion of the virion and cellular membranes by acting as a class I viral fusion protein. Under the current model, the protein has at least three conformational states: pre-fusion native state, pre-hairpin intermediate state, and post-fusion hairpin state. During viral and target cell membrane fusion, the coiled coil regions (heptad repeats) assume a trimer-of-hairpins structure, positioning the fusion peptide in close proximity to the C-terminal region of the ectodomain. The formation of this structure appears to drive apposition and subsequent fusion of viral and target cell membranes. Its function is as follows. Acts as a viral fusion peptide which is unmasked following S2 cleavage occurring upon virus endocytosis. The sequence is that of Spike glycoprotein from Bos taurus (Bovine).